A 515-amino-acid chain; its full sequence is Cytochrome P450 monooxygenase nsrP (515 aa).

The helical transmembrane segment at 20–40 (FGTAAFLAVLLSALAFLSYTP) threads the bilayer. Asn-84, Asn-406, and Asn-411 each carry an N-linked (GlcNAc...) asparagine glycan. Cys-452 provides a ligand contact to heme.

Belongs to the cytochrome P450 family. Heme is required as a cofactor.

Its subcellular location is the membrane. It functions in the pathway secondary metabolite biosynthesis. Cytochrome P450 monooxygenase; part of the gene cluster that mediates the biosynthesis of the tetrahydroxanthone dimer neosartorin, which exhibits antibacterial activity. The two different monomeric units appear to be synthesized by the same set of enzymes, among which the Baeyer-Villiger monooxygenase nsrF is the key enzyme for the divergence of the biosynthetic routes. The pathway begins with the synthesis of atrochrysone thioester by the polyketide synthase nsrB. The atrochrysone carboxyl ACP thioesterase nsrC then breaks the thioester bond and releases the atrochrysone carboxylic acid from AacuL. Atrochrysone carboxylic acid is decarboxylated by the decarboxylase nsrE, and oxidized by the anthrone oxygenase nsrD to yield emodin. Emodin is then reduced to emodin hydroquinone by the oxidoreductase nsrR. A-ring reduction by the short chain dehydrogenase nsrJ, dehydration by the scytalone dehydratase-like protein nsrI and probable spontaneous re-oxidation, results in overall deoxygenation to chrysophanol. The Baeyer-Villiger monooxygenase nsrF accepts chrysophanol as a substrate to insert one oxygen atom at two different positions to yield the precursors of both monomric units. NsrF is promiscuous/flexible in interacting with the 2 (non methylated and methylated) aromatic rings of chrysophanol, thus diverging the biosynthetic pathway at this point. After the hydrolysis of the lactones, methylesterification by the methyltransferase nsrG yields respectively moniliphenone and 2,2',6'-trihydroxy-4-methyl-6-methoxya-cyldiphenylmethanone. The next steps are the hydroxylation by the FAD-dependent monooxygenase nsrK, followed by isomerization by the monooxygenase nsrQ. The short chain dehydrogenase/reductase nsrO then catalyzes the C-5 ketoreduction to give the xanthone skeleton of blennolide C and 5-acetylblennolide A. The acetyltransferase nsrL has a strict substrate specificity and uses only blennolide A but not blennolide C to yield 5-acetylblennolide A as the single-acetylated product. In the final step of the biosynthesis, the heterodimerization of the 2 xanthones, blennolide C and 5-acetylblennolide A, is catalyzed by the cytochrome P450 monooxygenase nsrP. NsrP can utilize at least three different xanthones as its substrates to perform the dimerization reaction. The sequence is that of Cytochrome P450 monooxygenase nsrP from Aspergillus novofumigatus (strain IBT 16806).